Here is a 201-residue protein sequence, read N- to C-terminus: Protein TV1384 (201 aa).

Positions 11-200 (DIGAKAVMLA…EIEPNGKVEQ (190 aa)) constitute an AMMECR1 domain.

This is Protein TV1384 from Thermoplasma volcanium (strain ATCC 51530 / DSM 4299 / JCM 9571 / NBRC 15438 / GSS1).